Here is a 465-residue protein sequence, read N- to C-terminus: Plasma alpha-L-fucosidase (465 aa).

The signal sequence occupies residues 1–26 (MRPQELPRLAFPLLLLLLLPPPPCPA). Asn-169 and Asn-237 each carry an N-linked (GlcNAc...) asparagine glycan. Residue Ser-299 is modified to Phosphoserine. N-linked (GlcNAc...) asparagine glycosylation is present at Asn-375.

This sequence belongs to the glycosyl hydrolase 29 family. As to quaternary structure, homotetramer.

The protein resides in the secreted. It catalyses the reaction an alpha-L-fucoside + H2O = L-fucose + an alcohol. Alpha-L-fucosidase is responsible for hydrolyzing the alpha-1,6-linked fucose joined to the reducing-end N-acetylglucosamine of the carbohydrate moieties of glycoproteins. This chain is Plasma alpha-L-fucosidase (FUCA2), found in Pongo abelii (Sumatran orangutan).